A 1090-amino-acid polypeptide reads, in one-letter code: ATP-dependent helicase/deoxyribonuclease subunit B (1090 aa).

7–14 (GPVGSGKS) is an ATP binding site. Residues Cys-719, Cys-1035, Cys-1038, and Cys-1044 each coordinate [4Fe-4S] cluster.

This sequence belongs to the helicase family. AddB/RexB type 1 subfamily. In terms of assembly, heterodimer of AddA and AddB. It depends on Mg(2+) as a cofactor. [4Fe-4S] cluster is required as a cofactor.

Its function is as follows. The heterodimer acts as both an ATP-dependent DNA helicase and an ATP-dependent, dual-direction single-stranded exonuclease. Recognizes the chi site generating a DNA molecule suitable for the initiation of homologous recombination. The AddB subunit has 5' -&gt; 3' nuclease activity but not helicase activity. This chain is ATP-dependent helicase/deoxyribonuclease subunit B, found in Carboxydothermus hydrogenoformans (strain ATCC BAA-161 / DSM 6008 / Z-2901).